The sequence spans 205 residues: MESPMTSTLHRTPLATAGLALVVALGGCGGGGGDSRETPPYVPKATTVDATTPAPAAEPLTIASPMFADGAPIPVQFSCKGANVAPPLTWSSPAGAAELALVVDDPDAVGGLYVHWIVTGIAPGSGSTADGQTPAGGHSVPNSGGRQGYFGPCPPAGTGTHHYRFTLYHLPVALQLPPGATGVQAAQAIAQAASGQARLVGTFEG.

Positions 1 to 27 are cleaved as a signal peptide; that stretch reads MESPMTSTLHRTPLATAGLALVVALGG. The N-palmitoyl cysteine moiety is linked to residue Cys28. A lipid anchor (S-diacylglycerol cysteine) is attached at Cys28. A disordered region spans residues 126–145; that stretch reads GSTADGQTPAGGHSVPNSGG.

This sequence belongs to the UPF0098 family.

It is found in the cell membrane. This chain is Putative lipoprotein LppC (lppC), found in Mycobacterium tuberculosis (strain CDC 1551 / Oshkosh).